A 436-amino-acid chain; its full sequence is 5-methylthioadenosine/S-adenosylhomocysteine deaminase (436 aa).

Residues His-66 and His-68 each contribute to the Zn(2+) site. Glu-95, Arg-147, Arg-161, and His-187 together coordinate substrate. Residue His-214 coordinates Zn(2+). Substrate is bound by residues Glu-217 and Asp-303. Asp-303 contacts Zn(2+).

The protein belongs to the metallo-dependent hydrolases superfamily. MTA/SAH deaminase family. Requires Zn(2+) as cofactor.

It carries out the reaction S-adenosyl-L-homocysteine + H2O + H(+) = S-inosyl-L-homocysteine + NH4(+). It catalyses the reaction S-methyl-5'-thioadenosine + H2O + H(+) = S-methyl-5'-thioinosine + NH4(+). Catalyzes the deamination of 5-methylthioadenosine and S-adenosyl-L-homocysteine into 5-methylthioinosine and S-inosyl-L-homocysteine, respectively. Is also able to deaminate adenosine. The polypeptide is 5-methylthioadenosine/S-adenosylhomocysteine deaminase (Symbiobacterium thermophilum (strain DSM 24528 / JCM 14929 / IAM 14863 / T)).